Reading from the N-terminus, the 1441-residue chain is ABC transporter G family member 41 (1441 aa).

The segment covering 1–14 has biased composition (basic and acidic residues); sequence MEDKKQQQQQQREE. A disordered region spans residues 1 to 28; that stretch reads MEDKKQQQQQQREEAEAEEEAPVVPSSL. An ABC transporter 1 domain is found at 159–432; sequence ATARGLSRRP…FESCGFKCPE (274 aa). 192 to 199 is an ATP binding site; that stretch reads GPPGCGKT. The ABC transmembrane type-2 1 domain occupies 510 to 722; that stretch reads DLLKACFARE…AEIGLTGNEF (213 aa). 6 helical membrane-spanning segments follow: residues 528-548, 566-586, 600-620, 642-662, 672-692, and 758-778; these read FIYI…GTVF, SLFY…AIAV, FYPA…LSLV, FFCQ…LFRC, ASSV…GFII, and ASAL…GLTI. The region spanning 838 to 1090 is the ABC transporter 2 domain; the sequence is ISFQDVNYYV…NVIHYFETIP (253 aa). 883 to 890 contacts ATP; the sequence is GVTGAGKT. The ABC transmembrane type-2 2 domain maps to 1163–1379; it reads EQLKACIWKQ…TLNVFFTTQF (217 aa). 7 helical membrane-spanning segments follow: residues 1187-1207, 1215-1235, 1272-1292, 1300-1320, 1329-1349, 1357-1377, and 1413-1433; these read ILFI…QGDI, GLFT…INNC, IPYV…MIGY, FWFM…GMMI, VASI…GFIV, WWIW…FFTT, and LAAI…GLSI.

The protein belongs to the ABC transporter superfamily. ABCG family. PDR (TC 3.A.1.205) subfamily.

The protein localises to the membrane. May be a general defense protein. The polypeptide is ABC transporter G family member 41 (Oryza sativa subsp. japonica (Rice)).